Here is a 421-residue protein sequence, read N- to C-terminus: MSQLIDRRQNAGKKSTVNRQRFLRRYKSQIKKAVSEAVGKRSITEIDQGEQITIPAKDIYEPQFHRGHGGHIERVLPGNDNFIAGDRIKRPGGGGSGGAGGNASDSGEGEDNFVFELSREEFLELYFEDLELPDLVKKELARISTYKTVRAGVTTSGIPNNINVLRSMKQATGRRVALASPYKRRLKEAEEELERLKQLANPDKLDILKLERDIEFFKKKIQTVPFVDTIDLRYNHRVRVPSPSTQAVMFCVMDVSGSMDEAKKDIAKRFFILLYMFLTKNYEKIELVFIRHHTSAKEVNEEEFFYSRETGGTVVSSALELLNTIIEARYPPQAWNIYVAQASDGDNWNADSPYCQELLQEKIMPLLQYFAYIEIMPRHHQSLWEVYQQVKERYPNFAMENIDNVADIYPVFRELFKRKTV.

Residues 83 to 110 (IAGDRIKRPGGGGSGGAGGNASDSGEGE) are disordered. The span at 91–101 (PGGGGSGGAGG) shows a compositional bias: gly residues.

The protein belongs to the UPF0229 family.

This is UPF0229 protein lpl2726 from Legionella pneumophila (strain Lens).